The sequence spans 459 residues: Cysteine--tRNA ligase (459 aa).

Cysteine 28 serves as a coordination point for Zn(2+). The short motif at 30–40 is the 'HIGH' region element; sequence VTIYDLCHIGH. 3 residues coordinate Zn(2+): cysteine 209, histidine 234, and glutamate 238. A 'KMSKS' region motif is present at residues 266–270; that stretch reads KMSKS. Lysine 269 lines the ATP pocket.

It belongs to the class-I aminoacyl-tRNA synthetase family. Monomer. It depends on Zn(2+) as a cofactor.

It is found in the cytoplasm. The catalysed reaction is tRNA(Cys) + L-cysteine + ATP = L-cysteinyl-tRNA(Cys) + AMP + diphosphate. The chain is Cysteine--tRNA ligase from Shewanella baltica (strain OS185).